The chain runs to 236 residues: Phosphoribosylaminoimidazole-succinocarboxamide synthase (236 aa).

This sequence belongs to the SAICAR synthetase family.

The catalysed reaction is 5-amino-1-(5-phospho-D-ribosyl)imidazole-4-carboxylate + L-aspartate + ATP = (2S)-2-[5-amino-1-(5-phospho-beta-D-ribosyl)imidazole-4-carboxamido]succinate + ADP + phosphate + 2 H(+). It functions in the pathway purine metabolism; IMP biosynthesis via de novo pathway; 5-amino-1-(5-phospho-D-ribosyl)imidazole-4-carboxamide from 5-amino-1-(5-phospho-D-ribosyl)imidazole-4-carboxylate: step 1/2. The chain is Phosphoribosylaminoimidazole-succinocarboxamide synthase from Rickettsia typhi (strain ATCC VR-144 / Wilmington).